We begin with the raw amino-acid sequence, 518 residues long: ATP synthase subunit alpha (518 aa).

Residue 169–176 (GDRQTGKT) coordinates ATP.

Belongs to the ATPase alpha/beta chains family. As to quaternary structure, F-type ATPases have 2 components, CF(1) - the catalytic core - and CF(0) - the membrane proton channel. CF(1) has five subunits: alpha(3), beta(3), gamma(1), delta(1), epsilon(1). CF(0) has three main subunits: a(1), b(2) and c(9-12). The alpha and beta chains form an alternating ring which encloses part of the gamma chain. CF(1) is attached to CF(0) by a central stalk formed by the gamma and epsilon chains, while a peripheral stalk is formed by the delta and b chains.

Its subcellular location is the cell membrane. It carries out the reaction ATP + H2O + 4 H(+)(in) = ADP + phosphate + 5 H(+)(out). In terms of biological role, produces ATP from ADP in the presence of a proton gradient across the membrane. The alpha chain is a regulatory subunit. The sequence is that of ATP synthase subunit alpha from Mycoplasma pneumoniae (strain ATCC 29342 / M129 / Subtype 1) (Mycoplasmoides pneumoniae).